The sequence spans 156 residues: uncharacterized protein (156 aa).

A signal peptide spans 1-22; sequence MFGKVSSLLVFASFLIIQGAFA. Serine 129 carries the GPI-anchor amidated serine lipid modification. Positions 130 to 156 are cleaved as a propeptide — removed in mature form; the sequence is GSPVRFSKSSLLIVSLLSIAAFAALVL.

The protein resides in the cell membrane. This is an uncharacterized protein from Schizosaccharomyces pombe (strain 972 / ATCC 24843) (Fission yeast).